The chain runs to 418 residues: Deubiquitinase and deneddylase Dub1 (418 aa).

Positions 1 to 11 are enriched in polar residues; the sequence is MLSPTNSTSKT. The tract at residues 1 to 23 is disordered; sequence MLSPTNSTSKTAPVPPQDSSKPV. The helical transmembrane segment at 40-60 threads the bilayer; the sequence is TALVVLLVVVTLGLILLFYSF. Residues 72-145 are disordered; sequence TRPSTKEQPT…LPPKAPKPVK (74 aa). Positions 86 to 141 are enriched in pro residues; that stretch reads VPLPSPPLAVPRPSTPPPPVISRPSMPPAPTPAISPPSTPSAPKPSTPPPLPPKAP. Active-site residues include histidine 288, aspartate 305, and cysteine 358.

It belongs to the peptidase C48 family.

It localises to the secreted. The protein localises to the host cell. Its subcellular location is the membrane. Functionally, effector proteins function to alter host cell physiology and promote bacterial survival in host tissues. This protease possesses deubiquitinating and deneddylating activities. The protein is Deubiquitinase and deneddylase Dub1 (cdu1) of Chlamydia trachomatis serovar E (strain Sweden2).